The chain runs to 941 residues: Peroxisomal ATPase PEX6 (941 aa).

ATP is bound by residues 384–391 (GIPGCGKR) and 698–705 (GPPGTGKT).

Belongs to the AAA ATPase family. As to quaternary structure, interacts with PEX1; forming the PEX1-PEX6 AAA ATPase complex, which is composed of a heterohexamer formed by a trimer of PEX1-PEX6 dimers. Interacts with APME9.

It is found in the cytoplasm. Its subcellular location is the cytosol. It localises to the peroxisome membrane. It catalyses the reaction ATP + H2O = ADP + phosphate + H(+). Its function is as follows. Component of the PEX1-PEX6 AAA ATPase complex, a protein dislocase complex that mediates the ATP-dependent extraction of the PEX5 receptor from peroxisomal membranes, an essential step for PEX5 recycling. Specifically recognizes PEX5 monoubiquitinated at 'Cys-11', and pulls it out of the peroxisome lumen through the PEX2-PEX10-PEX12 retrotranslocation channel. Extraction by the PEX1-PEX6 AAA ATPase complex is accompanied by unfolding of the TPR repeats and release of bound cargo from PEX5. Required for jasmonate biosynthesis. Necessary for the developmental elimination of obsolete peroxisome matix proteins. The polypeptide is Peroxisomal ATPase PEX6 (Arabidopsis thaliana (Mouse-ear cress)).